Reading from the N-terminus, the 120-residue chain is Large ribosomal subunit protein uL18 (120 aa).

The protein belongs to the universal ribosomal protein uL18 family. In terms of assembly, part of the 50S ribosomal subunit; part of the 5S rRNA/L5/L18/L25 subcomplex. Contacts the 5S and 23S rRNAs.

Functionally, this is one of the proteins that bind and probably mediate the attachment of the 5S RNA into the large ribosomal subunit, where it forms part of the central protuberance. This is Large ribosomal subunit protein uL18 from Hyphomonas neptunium (strain ATCC 15444).